The primary structure comprises 328 residues: Cell cycle control protein 50A (328 aa).

A disordered region spans residues 1–28 (MAMNYSAKDEVDGGPTGPPGGAAKTRRP). The residue at position 2 (Ala-2) is an N-acetylalanine. The tract at residues 2–48 (AMNYSAKDEVDGGPTGPPGGAAKTRRPDNTAFKQQRLPAWQPILTAG) is required for ATPase and aminophospholipid flippase activity. Residues 2-49 (AMNYSAKDEVDGGPTGPPGGAAKTRRPDNTAFKQQRLPAWQPILTAGT) are Cytoplasmic-facing. Positions 49-315 (TVLPTFFIIG…LGVVLLVINH (267 aa)) are interaction with ATP8A2. The chain crosses the membrane as a helical span at residues 50–70 (VLPTFFIIGLIFIPIGIGIFV). The Exoplasmic loop portion of the chain corresponds to 71–292 (TSNNIREIEG…SWMGGKNPFL (222 aa)). Residues 102–125 (RDDSQLNGDPSALLNPSKECEPYR) form a disordered region. Cys-121 and Cys-135 form a disulfide bridge. 2 N-linked (GlcNAc...) asparagine glycosylation sites follow: Asn-144 and Asn-261. The helical transmembrane segment at 293 to 313 (GIAYITIGSISFLLGVVLLVI) threads the bilayer. Residues 314–328 (NHKYRNSSNTADITI) are Cytoplasmic-facing.

The protein belongs to the CDC50/LEM3 family. Component of various P4-ATPase flippase complexes which consists of a catalytic alpha subunit and an accessory beta subunit. Interacts with ATP8A1 to form a flippase complex; this complex forms an intermediate phosphoenzyme. Interacts with ATP8A2 to form a flippase complex. TP8B1:TMEM30A and ATP8B2:TMEM30A flippase complexes have been shown to form intermediate phosphoenzymes in vitro. Interacts with alpha subunits ATP8A1, ATP8B1, ATP8B2, ATP8B4, ATP10A, ATP10B, ATP10D, ATP11A, ATP11B and ATP11C. Post-translationally, N-glycosylated. Contains high mannose-type oligosaccharides.

It is found in the membrane. Its subcellular location is the golgi apparatus. The protein resides in the cytoplasmic vesicle. It localises to the secretory vesicle membrane. The protein localises to the apical cell membrane. It is found in the photoreceptor inner segment. Its subcellular location is the cell projection. The protein resides in the cilium. It localises to the photoreceptor outer segment. Its function is as follows. Accessory component of a P4-ATPase flippase complex which catalyzes the hydrolysis of ATP coupled to the transport of aminophospholipids from the outer to the inner leaflet of various membranes and ensures the maintenance of asymmetric distribution of phospholipids. Phospholipid translocation also seems to be implicated in vesicle formation and in uptake of lipid signaling molecules. The beta subunit may assist in binding of the phospholipid substrate. Required for the proper folding, assembly and ER to Golgi exit of the ATP8A2:TMEM30A flippase complex. ATP8A2:TMEM30A may be involved in regulation of neurite outgrowth, and, reconstituted to liposomes, predomiminantly transports phosphatidylserine (PS) and to a lesser extent phosphatidylethanolamine (PE). The ATP8A1:TMEM30A flippase complex seems to play a role in regulation of cell migration probably involving flippase-mediated translocation of phosphatidylethanolamine (PE) at the plasma membrane. Required for the formation of the ATP8A2, ATP8B1 and ATP8B2 P-type ATPAse intermediate phosphoenzymes. Involved in uptake of platelet-activating factor (PAF). Can also mediate the export of alpha subunits ATP8A1, ATP8B1, ATP8B2, ATP8B4, ATP10A, ATP10B, ATP10D, ATP11A, ATP11B and ATP11C from ER to other membrane localizations. This Rattus norvegicus (Rat) protein is Cell cycle control protein 50A.